The following is a 395-amino-acid chain: MNQPWRTHLQTKLKQLHEQGQYRNLHVTEQAEETWLIRDEKRMLNLASNNYLGLAGDERLKEAAIVCTRKYGTGATASRLVVGNYSLYEEVERSICNWKGTEKALVVNSGFTANVGAISSLACRHDIVFSDKLNHASIVDGIILSGAEHKRYRHNDLNHLEALLKTASPEKRKLIVTDTVFSMDGDTAHLRELVQLKEKYGAIIIVDEAHASGIYGIGGAGLSHIEKDLAQKIDIHMGTFSKALGCYGAYLTGDAIYIEYLQNMMRSFIFTTALPPSTLGAVQKAIEIVQEDHKRRENLIANGEYFRSKLREAGFNIGNSSTHIVPIVVGSNENTLRFSKRLQEAGIAAIAIRPPTVPVHSSRIRFAVTSQHTIADLKWAIDRITHIAKEEELFV.

Arg-23 contributes to the substrate binding site. 110–111 contacts pyridoxal 5'-phosphate; the sequence is GF. His-135 serves as a coordination point for substrate. Residues Ser-182, 207–210, and 239–242 each bind pyridoxal 5'-phosphate; these read DEAH and TFSK. An N6-(pyridoxal phosphate)lysine modification is found at Lys-242. Thr-356 provides a ligand contact to substrate.

Belongs to the class-II pyridoxal-phosphate-dependent aminotransferase family. BioF subfamily. Homodimer. Pyridoxal 5'-phosphate serves as cofactor.

The enzyme catalyses 6-carboxyhexanoyl-[ACP] + L-alanine + H(+) = (8S)-8-amino-7-oxononanoate + holo-[ACP] + CO2. The protein operates within cofactor biosynthesis; biotin biosynthesis. Catalyzes the decarboxylative condensation of pimeloyl-[acyl-carrier protein] and L-alanine to produce 8-amino-7-oxononanoate (AON), [acyl-carrier protein], and carbon dioxide. In Bacillus anthracis, this protein is Putative 8-amino-7-oxononanoate synthase (bioF).